The chain runs to 360 residues: U7 snRNA-associated Sm-like protein LSm11 (360 aa).

Residues 1–29 form a disordered region; that stretch reads MEERERGARSAGAGSPARPPSPRLDVSSD. Ser15 and Ser21 each carry phosphoserine. Arg41 is modified (omega-N-methylarginine). The segment at 68–143 is disordered; the sequence is RGGGRGRGRA…PGRSRKAPRN (76 aa). Positions 78 to 94 are enriched in low complexity; it reads RGAAAGSGVPAAPGPSG. Lys120 participates in a covalent cross-link: Glycyl lysine isopeptide (Lys-Gly) (interchain with G-Cter in SUMO2). Phosphoserine is present on Ser154. The Sm domain occupies 154–229; sequence SPLGELHRCI…LTLTRLFDRL (76 aa). Residues 171–204 form an SM 1 region; it reads VHIRTFKGLRGVCTGFLVAFDKFWNMALTDVDET. The tract at residues 268 to 333 is disordered; that stretch reads ADTGRGSHKR…SRKKKRKPKV (66 aa). Ser280 is subject to Phosphoserine. The segment covering 299–322 has biased composition (polar residues); that stretch reads GRTTRTDGSSVGGTFSRATTLSRG. The segment at 343–356 is SM 2; sequence INQIFIRGENVLLV.

The protein belongs to the snRNP Sm proteins family. Component of the heptameric ring U7 snRNP complex, or U7 Sm protein core complex, at least composed of LSM10, LSM11, SNRPB, SNRPD3, SNRPE, SNRPF, SNRPG and U7 snRNA. Formation of the U7 snRNP is an ATP-dependent process mediated by a specialized SMN complex containing at least the Sm protein core complex and additionally, the U7-specific LSM10 and LSM11 proteins. Identified in a histone pre-mRNA complex, at least composed of ERI1, LSM11, SLBP, SNRPB, SYNCRIP and YBX1. Interacts (via the Sm domains) with CLNS1A. Interacts with SMN and ZNF473. Interacts with PRMT5 and WDR77.

The protein localises to the nucleus. Component of the U7 snRNP complex that is involved in the histone 3'-end pre-mRNA processing. Increases U7 snRNA levels but not histone 3'-end pre-mRNA processing activity, when overexpressed. Required for cell cycle progression from G1 to S phases. Binds specifically to the Sm-binding site of U7 snRNA. The sequence is that of U7 snRNA-associated Sm-like protein LSm11 from Homo sapiens (Human).